We begin with the raw amino-acid sequence, 352 residues long: MSQNQASSPADAKPATAISRIAALIPGILLCIAVAGVSALLERAELGVFEHPYVEALVMAILLGMALRSFWKPAPRWQAGIAFSAKQLLEVAVMLLGASISFAAIAASGIALLASIAAVVVIALCVSFGLSRLLGLSTRLSILIACGNSICGNSAIAAVAPIIGANNDEIASSISFTAILGVMMVLGLPLLIPLLQLSATQYGILAGLTVYAVPQVLAATVPAGLVSTQIGTLVKLMRVLMLGPVVVGLSLVASRWQSDAKKTNVGFFRLVPWFILGFLALATLRSLEIVPSTVVGPVTKITSFLTVVSMAALGLGVDVRVLANVGGRVTAAVTLSLMLLLGISIALVHWFK.

The next 11 helical transmembrane spans lie at 21–43, 53–71, 88–110, 114–136, 143–165, 175–197, 204–226, 236–253, 265–284, 294–316, and 329–351; these read IAAL…LLER, YVEA…RSFW, LLEV…ASGI, ASIA…LLGL, LIAC…IIGA, SFTA…LLQL, ILAG…AGLV, LMRV…SLVA, VGFF…LATL, VVGP…LGLG, and VTAA…VHWF.

The protein belongs to the UPF0324 family.

The protein resides in the cell membrane. In Bradyrhizobium diazoefficiens (strain JCM 10833 / BCRC 13528 / IAM 13628 / NBRC 14792 / USDA 110), this protein is UPF0324 membrane protein blr3189.